The chain runs to 193 residues: MAEHKPDIMYGTTIITVRKGGKVVIAGDGQVSFGQTIMKGNARKVRRLGKSGTVIAGFAGATADAFTLLERLETKLEQYPDQLMRACVELAKDWRTDRYLRRLEAMMLVADKKITLALTGLGDVLEPEDGIMAIGSGGNFALSAAWALVDMNLDAETIARKAMDIAAKICVYTNDHFTIETLDAELSSLEKAI.

Thr-12 is a catalytic residue. The Na(+) site is built by Ala-167, Cys-170, and Thr-173.

Belongs to the peptidase T1B family. HslV subfamily. In terms of assembly, a double ring-shaped homohexamer of HslV is capped on each side by a ring-shaped HslU homohexamer. The assembly of the HslU/HslV complex is dependent on binding of ATP.

It is found in the cytoplasm. The enzyme catalyses ATP-dependent cleavage of peptide bonds with broad specificity.. With respect to regulation, allosterically activated by HslU binding. Functionally, protease subunit of a proteasome-like degradation complex believed to be a general protein degrading machinery. The chain is ATP-dependent protease subunit HslV from Bartonella quintana (strain Toulouse) (Rochalimaea quintana).